A 254-amino-acid chain; its full sequence is 4-hydroxy-tetrahydrodipicolinate reductase (254 aa).

Residues 10–15 (GATGKV) and 101–103 (GTT) contribute to the NAD(+) site. The Proton donor/acceptor role is filled by His157. Residue His158 participates in (S)-2,3,4,5-tetrahydrodipicolinate binding. The active-site Proton donor is Lys161. (S)-2,3,4,5-tetrahydrodipicolinate is bound at residue 167–168 (GT).

This sequence belongs to the DapB family.

It is found in the cytoplasm. The enzyme catalyses (S)-2,3,4,5-tetrahydrodipicolinate + NAD(+) + H2O = (2S,4S)-4-hydroxy-2,3,4,5-tetrahydrodipicolinate + NADH + H(+). It carries out the reaction (S)-2,3,4,5-tetrahydrodipicolinate + NADP(+) + H2O = (2S,4S)-4-hydroxy-2,3,4,5-tetrahydrodipicolinate + NADPH + H(+). The protein operates within amino-acid biosynthesis; L-lysine biosynthesis via DAP pathway; (S)-tetrahydrodipicolinate from L-aspartate: step 4/4. Catalyzes the conversion of 4-hydroxy-tetrahydrodipicolinate (HTPA) to tetrahydrodipicolinate. The polypeptide is 4-hydroxy-tetrahydrodipicolinate reductase (Symbiobacterium thermophilum (strain DSM 24528 / JCM 14929 / IAM 14863 / T)).